Reading from the N-terminus, the 442-residue chain is Probable serine/threonine-protein kinase kinase DDB_G0280643 (442 aa).

Residues 74–398 (IDPNTIVDCG…VNEILESPYF (325 aa)) enclose the Protein kinase domain. ATP-binding positions include 80–88 (VDCGTNGIM) and lysine 103. Aspartate 231 (proton acceptor) is an active-site residue.

It belongs to the protein kinase superfamily. CMGC Ser/Thr protein kinase family. MAP kinase subfamily.

The enzyme catalyses L-seryl-[protein] + ATP = O-phospho-L-seryl-[protein] + ADP + H(+). The catalysed reaction is L-threonyl-[protein] + ATP = O-phospho-L-threonyl-[protein] + ADP + H(+). This is Probable serine/threonine-protein kinase kinase DDB_G0280643 from Dictyostelium discoideum (Social amoeba).